Reading from the N-terminus, the 201-residue chain is MKKILTTPIKAEDLQDIRVGDVIYLTGTLVTCRDVCHRRLIELKRPIPYDLNGKAIFHAGPIVRKNGDKWEMVSVGPTTSMRMESFEREFIEQTGVKLVVGKGGMGPLTEEGCQKFKALHVIFPAGCAVLAATQVEEIEEVHWTELGMPESLWVCRVKEFGPLIVSIDTHGNNLIAENKKLFAERRDPIVEEICEHVHYIK.

Residue His-37 is part of the active site.

It belongs to the class-I fumarase family. Heterotetramer of two alpha and two beta subunits.

The catalysed reaction is (2R,3R)-tartrate = oxaloacetate + H2O. The protein is L(+)-tartrate dehydratase subunit beta (ttdB) of Escherichia coli O6:K15:H31 (strain 536 / UPEC).